The primary structure comprises 419 residues: MLGIITFIIIFGILVIVHEFGHFYFAKKSGILVREFAIGMGPKIFSHVDQGGTLYTLRMLPLGGYVRMAGWGDDKTEIKTGTPASLTLNEQGFVKRINLSQSKLDPTSLPMHVTGYDLEDQLSITGLVLEETKTYKVAHDATIVEEDGTEIRIAPLDVQYQNASIGGRLITNFAGPMNNFILGIVVFILLVFLQGGMPDFSSNHVGVQENGAAAKAGLRDNDQIVAINGYKVTSWNDLTEAVDLATRDLGPSQTIKVTYKSHQRLKTVAVKPQKHAKTYTIGVKASLKTGFKDKLLGGLELAWSGAFTILNALKGLITGFSLNKLGGPVAMYDMSNQAAQNGLESVLSLMAMLSINLGIFNLIPIPALDGGKILMNIIEAIRRKPIKQETEAYITLAGVAIMVVLMIAVTWNDIMRVFF.

Histidine 18 provides a ligand contact to Zn(2+). Residue glutamate 19 is part of the active site. Histidine 22 contacts Zn(2+). 4 consecutive transmembrane segments (helical) span residues 169 to 191 (LITNFAGPMNNFILGIVVFILLV), 301 to 323 (LAWSGAFTILNALKGLITGFSLN), 343 to 365 (LESVLSLMAMLSINLGIFNLIPI), and 392 to 411 (AYITLAGVAIMVVLMIAVTW). Positions 175–274 (GPMNNFILGI…LKTVAVKPQK (100 aa)) constitute a PDZ domain.

This sequence belongs to the peptidase M50B family. Zn(2+) serves as cofactor.

It localises to the cell membrane. The chain is Putative zinc metalloprotease M6_Spy1682 from Streptococcus pyogenes serotype M6 (strain ATCC BAA-946 / MGAS10394).